The sequence spans 171 residues: Co-chaperone protein HscB homolog (171 aa).

The J domain occupies 2-74 (NHFELFGLPP…ISRAEYLLSQ (73 aa)).

Belongs to the HscB family. As to quaternary structure, interacts with HscA and stimulates its ATPase activity.

In terms of biological role, co-chaperone involved in the maturation of iron-sulfur cluster-containing proteins. Seems to help targeting proteins to be folded toward HscA. This chain is Co-chaperone protein HscB homolog, found in Vibrio vulnificus (strain YJ016).